The sequence spans 480 residues: Proline--tRNA ligase (480 aa).

It belongs to the class-II aminoacyl-tRNA synthetase family. ProS type 3 subfamily. As to quaternary structure, homodimer.

The protein resides in the cytoplasm. It carries out the reaction tRNA(Pro) + L-proline + ATP = L-prolyl-tRNA(Pro) + AMP + diphosphate. Catalyzes the attachment of proline to tRNA(Pro) in a two-step reaction: proline is first activated by ATP to form Pro-AMP and then transferred to the acceptor end of tRNA(Pro). The polypeptide is Proline--tRNA ligase (Methanosarcina mazei (strain ATCC BAA-159 / DSM 3647 / Goe1 / Go1 / JCM 11833 / OCM 88) (Methanosarcina frisia)).